Reading from the N-terminus, the 501-residue chain is UPF0371 protein CD630_08980 (501 aa).

It belongs to the UPF0371 family.

This is UPF0371 protein CD630_08980 from Clostridioides difficile (strain 630) (Peptoclostridium difficile).